The following is a 237-amino-acid chain: Arginine-binding periplasmic protein (237 aa).

A signal peptide spans 1–18 (MKKTLLTLLFGCVVTAQA).

The protein belongs to the bacterial solute-binding protein 3 family.

It is found in the periplasm. Its function is as follows. Binds arginine; part of the arginine periplasmic transport system. This Mannheimia haemolytica (Pasteurella haemolytica) protein is Arginine-binding periplasmic protein (lapT).